A 235-amino-acid polypeptide reads, in one-letter code: Carboxy-S-adenosyl-L-methionine synthase (235 aa).

S-adenosyl-L-methionine contacts are provided by residues Y35, 60–62 (GCS), 83–84 (DN), N124, and R191.

It belongs to the class I-like SAM-binding methyltransferase superfamily. Cx-SAM synthase family. Homodimer.

It catalyses the reaction prephenate + S-adenosyl-L-methionine = carboxy-S-adenosyl-L-methionine + 3-phenylpyruvate + H2O. In terms of biological role, catalyzes the conversion of S-adenosyl-L-methionine (SAM) to carboxy-S-adenosyl-L-methionine (Cx-SAM). In Campylobacter jejuni subsp. doylei (strain ATCC BAA-1458 / RM4099 / 269.97), this protein is Carboxy-S-adenosyl-L-methionine synthase.